The sequence spans 542 residues: Cytochrome P450 27C1 (542 aa).

The N-terminal 80 residues, methionine 1 to leucine 80, are a transit peptide targeting the mitochondrion. A disordered region spans residues alanine 20 to proline 75. The span at proline 32 to alanine 46 shows a compositional bias: low complexity. Heme is bound at residue cysteine 488.

The protein belongs to the cytochrome P450 family. Heme is required as a cofactor. As to expression, widely expressed, with highest levels in the liver, kidney and pancreas. In terms of tissue distribution, expressed in the skin (at protein level).

It is found in the mitochondrion membrane. The catalysed reaction is all-trans-retinol + 2 reduced [adrenodoxin] + O2 + 2 H(+) = all-trans-3,4-didehydroretinol + 2 oxidized [adrenodoxin] + 2 H2O. The enzyme catalyses all-trans-retinol + 2 reduced [adrenodoxin] + O2 + 2 H(+) = all-trans-4-hydroxyretinol + 2 oxidized [adrenodoxin] + H2O. It carries out the reaction all-trans-retinol + 2 reduced [adrenodoxin] + O2 + 2 H(+) = all-trans-3-hydroxyretinol + 2 oxidized [adrenodoxin] + H2O. It functions in the pathway cofactor metabolism; retinol metabolism. In terms of biological role, a cytochrome P450 monooxygenase that catalyzes the 3,4 desaturation of all-trans-retinol (also called vitamin A1) to all-trans-3,4-didehydroretinol (also called vitamin A2) in the skin. Desaturates with lower efficiency all-trans retinal and all-trans retinoic acid. Forms minor amounts of 3-hydroxy and 4-hydroxy all-trans-retinol derivatives. Mechanistically, uses molecular oxygen inserting one oxygen atom into a substrate and reducing the second into a water molecule. Two electrons are provided by NADPH via a two-protein mitochondrial transfer system comprising flavoprotein FDXR (adrenodoxin/ferredoxin reductase) and nonheme iron-sulfur protein FDX1 or FDX2 (adrenodoxin/ferredoxin). The sequence is that of Cytochrome P450 27C1 from Homo sapiens (Human).